A 330-amino-acid chain; its full sequence is MLSSATFKLQPTATGLTENHRLRLFSGSSNVQLSQEVARYLGMDLGPMIRKRFADGELYVQIQESIRGCDVYLIQPCCQPVNDHLMELLIMVDACRRASARQVTAVIPYYGYARADRKTAGRESITAKLVANLITQAGANRVLAMDLHAAQIQGYFDIPFDHVYGSPVLLDYLTSKQLHDIVVVSPDVGGVARARAFAKKLNDAPLAIIDKRRQAHNVAEVLNVIGDVKGKTAVLVDDMIDTGGTIAAGAKLLREEGARQVYACATHAVFSPPAVERLSSGLFEEVIVTNTIPIPESDRFPQLVVLSVANLLGETIWRIHEDTSISSMFR.

55–57 (DGE) serves as a coordination point for ATP. Mg(2+)-binding residues include histidine 148 and aspartate 187. Lysine 211 is an active-site residue. D-ribose 5-phosphate-binding positions include arginine 213, aspartate 237, and 241–245 (DTGGT).

It belongs to the ribose-phosphate pyrophosphokinase family. Class I subfamily. In terms of assembly, homohexamer. It depends on Mg(2+) as a cofactor.

The protein resides in the cytoplasm. The enzyme catalyses D-ribose 5-phosphate + ATP = 5-phospho-alpha-D-ribose 1-diphosphate + AMP + H(+). It functions in the pathway metabolic intermediate biosynthesis; 5-phospho-alpha-D-ribose 1-diphosphate biosynthesis; 5-phospho-alpha-D-ribose 1-diphosphate from D-ribose 5-phosphate (route I): step 1/1. Its function is as follows. Involved in the biosynthesis of the central metabolite phospho-alpha-D-ribosyl-1-pyrophosphate (PRPP) via the transfer of pyrophosphoryl group from ATP to 1-hydroxyl of ribose-5-phosphate (Rib-5-P). In Nostoc sp. (strain PCC 7120 / SAG 25.82 / UTEX 2576), this protein is Ribose-phosphate pyrophosphokinase.